The sequence spans 380 residues: L-lactate dehydrogenase (380 aa).

The FMN hydroxy acid dehydrogenase domain maps to 1–380 (MIISSASDYR…DASILVKAVA (380 aa)). Tyrosine 24 is a binding site for substrate. Residues serine 106 and glutamine 127 each contribute to the FMN site. Position 129 (tyrosine 129) interacts with substrate. Residue threonine 155 coordinates FMN. Arginine 164 lines the substrate pocket. Lysine 251 is an FMN binding site. Histidine 275 serves as the catalytic Proton acceptor. Arginine 278 serves as a coordination point for substrate. An FMN-binding site is contributed by 306–330 (DSGIRSGLDVVRMLALGAKGVLLGR).

Belongs to the FMN-dependent alpha-hydroxy acid dehydrogenase family. In terms of assembly, homotetramer. FMN is required as a cofactor.

Its subcellular location is the cell inner membrane. It carries out the reaction (S)-lactate + A = pyruvate + AH2. Catalyzes the conversion of L-lactate to pyruvate. Is coupled to the respiratory chain. In Pseudomonas syringae pv. syringae (strain B728a), this protein is L-lactate dehydrogenase.